Here is a 413-residue protein sequence, read N- to C-terminus: S-adenosylmethionine synthase (413 aa).

His15 lines the ATP pocket. A Mg(2+)-binding site is contributed by Asp17. K(+) is bound at residue Glu43. Glu56 and Gln100 together coordinate L-methionine. The segment at 100–110 is flexible loop; the sequence is QSPDISQGVNE. ATP-binding positions include 171–173, 248–249, Asp257, 263–264, Ala280, and Lys284; these read DGK, KF, and RK. An L-methionine-binding site is contributed by Asp257. Lys288 is an L-methionine binding site.

The protein belongs to the AdoMet synthase family. In terms of assembly, homotetramer; dimer of dimers. It depends on Mg(2+) as a cofactor. Requires K(+) as cofactor.

It localises to the cytoplasm. It catalyses the reaction L-methionine + ATP + H2O = S-adenosyl-L-methionine + phosphate + diphosphate. It participates in amino-acid biosynthesis; S-adenosyl-L-methionine biosynthesis; S-adenosyl-L-methionine from L-methionine: step 1/1. Its function is as follows. Catalyzes the formation of S-adenosylmethionine (AdoMet) from methionine and ATP. The overall synthetic reaction is composed of two sequential steps, AdoMet formation and the subsequent tripolyphosphate hydrolysis which occurs prior to release of AdoMet from the enzyme. The polypeptide is S-adenosylmethionine synthase (Prochlorococcus marinus subsp. pastoris (strain CCMP1986 / NIES-2087 / MED4)).